Consider the following 911-residue polypeptide: MQLRVHPTMDCSGRSTSNIERDSDLGDDLSHGDRTDDEMRDCDSVDGEHHQLSAKAAIAARLSHTVSGGGGSFASPEPQTELPLSHHHQLPPNHPLNALGSFMGIGGLHSIPNLQHSDVLEKLKMQVRDMKVGLMEQDYAAAAHAAAFGANMLPTTISSGFPLPHNSVAFGHVTSSPSGGNGSSYNGGTTPTNSSNSNATTNGGGTAGPGGTGGSGGGGGGGGGGGGGVGGHQFSFASPTAAPSGKEARHFAANSASNSSTSSEASNSSQQNNGWSFEEQFKQVRQLYEINDDPKRKEFLDDLFSFMQKRGTPINRLPIMAKSVLDLYELYNLVIARGGLVDVINKKLWQEIIKGLHLPSSITSAAFTLRTQYMKYLYPYECEKKNLSTPAELQAAIDGNRREGRRSSYGQYEAMHNQMPMTPISRPSLPGGMQQMSPLALVTHAAVANNQQAQAAAAAAAAHHRLMGAPAFGQMPNLVKQEIESRMMEYLQLIQAKKEQGMPPVLGGNHPHQQQHSQQQQQQQHHHQQQQQQQSQQQHHLQQQRQRSQSPDLSKHEALSAQVALWHMYHNNNSPPGSAHTSPQQREALNLSDSPPNLTNIKREREREPTPEPVDQDDKFVDQPPPAKRVGSGLLPPGFPANFYLNPHNMAAVAAAAGFHHPSMGHQQDAASEGEPEDDYAHGEHNTTGNSSSMHDDSEPQQMNGHHHHQTHHLDKSDDSAIENSPTTSTTTGGSVGHRHSSPVSTKKKGGAKPQSGGKDVPTEDKDASSSGKLNPLETLSLLSGMQFQVARNGTGDNGEPQLIVNLELNGVKYSGVLVANVPLSQSETRTSSPCHAEAPTVEEEKDEEEEEEPKAAEEESHRSPVKQENEDVDQDMEGSEVLLNGGASAVGGAGAGVGVGVPLLKDAVVS.

Disordered regions lie at residues 1 to 44, 67 to 87, and 172 to 274; these read MQLR…DCDS, SGGGGSFASPEPQTELPLSHH, and HVTS…QNNG. Basic and acidic residues predominate over residues 19–34; it reads IERDSDLGDDLSHGDR. Phosphoserine is present on serine 30. Position 35 is a phosphothreonine (threonine 35). Phosphoserine is present on serine 44. Residues 174–201 show a composition bias toward low complexity; sequence TSSPSGGNGSSYNGGTTPTNSSNSNATT. Residues 202 to 231 are compositionally biased toward gly residues; that stretch reads NGGGTAGPGGTGGSGGGGGGGGGGGGGVGG. A compositionally biased stretch (low complexity) spans 252–273; it reads AANSASNSSTSSEASNSSQQNN. An ARID domain is found at 293–385; sequence DPKRKEFLDD…YLYPYECEKK (93 aa). Disordered regions lie at residues 501-633, 662-775, and 826-877; these read GMPP…VGSG, PSMG…GKLN, and QSET…DQDM. Over residues 512 to 550 the composition is skewed to low complexity; the sequence is HQQQHSQQQQQQQHHHQQQQQQQSQQQHHLQQQRQRSQS. A compositionally biased stretch (polar residues) spans 570–600; that stretch reads HNNNSPPGSAHTSPQQREALNLSDSPPNLTN. Residues serine 592 and serine 594 each carry the phosphoserine modification. The span at 601 to 621 shows a compositional bias: basic and acidic residues; it reads IKREREREPTPEPVDQDDKFV. Serine 720 carries the post-translational modification Phosphoserine. In terms of domain architecture, REKLES spans 731–825; that stretch reads TTGGSVGHRH…GVLVANVPLS (95 aa). Over residues 737–751 the composition is skewed to basic residues; sequence GHRHSSPVSTKKKGG. Over residues 841–853 the composition is skewed to acidic residues; the sequence is TVEEEKDEEEEEE. The segment covering 854–870 has biased composition (basic and acidic residues); that stretch reads PKAAEEESHRSPVKQEN.

Present in the pharyngeal muscles, hindgut epithelium, amnioserosa, ring gland, midgut-hindgut junction, posterior region of each brain lobe, longitudinal glial cells of the CNS and the salivary gland duct of germ-band retracted embryos.

The protein resides in the nucleus. Its function is as follows. Transcription factor which is a downstream target of gcm and repo. Directly or indirectly activates the transcription of locos and pros, which are essential for the development of some glial cells. Plays an essential role in defining the cell shape and migration characteristics of longitudinal glia that enable them to establish a normal axon scaffold. This is Protein dead ringer (retn) from Drosophila melanogaster (Fruit fly).